Consider the following 353-residue polypeptide: MSEIFDVNAAIYPFPARPVPLDTNEKAFYREKIKTLLKQRDAVLVAHYYTDPEIQALAEETGGCVADSLEMARFGNNHPASTLLVAGVRFMGETAKILNPEKKVLMPTLNAECSLDLGCPVDEFTAFCDSHPDRTVVVYANTSAAVKAKADWVVTSSIAVELIEHLDSLGEKIIWAPDRHLGSYVQKKSGADVLCWQGACIVHDEFKTQALARMKALYPDAAVLVHPESPQAVVDMADAVGSTSQLIQAAKTLPQKTLIVATDRGIFYKMQQACPDKELFEAPTAGEGATCRSCAHCPWMAMNGLRAIAEGLEQGGGMHEIHVDEELRQQALIPLNRMLDFANQLKLQVKGNA.

Iminosuccinate is bound by residues H47 and S68. C113 is a binding site for [4Fe-4S] cluster. Iminosuccinate is bound by residues Y139–N141 and S156. C200 serves as a coordination point for [4Fe-4S] cluster. Residues H226 to E228 and T243 contribute to the iminosuccinate site. C297 lines the [4Fe-4S] cluster pocket.

It belongs to the quinolinate synthase family. Type 1 subfamily. The cofactor is [4Fe-4S] cluster.

It is found in the cytoplasm. It catalyses the reaction iminosuccinate + dihydroxyacetone phosphate = quinolinate + phosphate + 2 H2O + H(+). It participates in cofactor biosynthesis; NAD(+) biosynthesis; quinolinate from iminoaspartate: step 1/1. Catalyzes the condensation of iminoaspartate with dihydroxyacetone phosphate to form quinolinate. The chain is Quinolinate synthase from Yersinia pestis bv. Antiqua (strain Nepal516).